A 310-amino-acid chain; its full sequence is Lipoyl synthase (310 aa).

Cys51, Cys56, Cys62, Cys77, Cys81, Cys84, and Ser290 together coordinate [4Fe-4S] cluster. The Radical SAM core domain maps to 63–280; that stretch reads WSRKTATYLA…RRVGESLGLF (218 aa).

Belongs to the radical SAM superfamily. Lipoyl synthase family. The cofactor is [4Fe-4S] cluster.

The protein resides in the cytoplasm. It carries out the reaction [[Fe-S] cluster scaffold protein carrying a second [4Fe-4S](2+) cluster] + N(6)-octanoyl-L-lysyl-[protein] + 2 oxidized [2Fe-2S]-[ferredoxin] + 2 S-adenosyl-L-methionine + 4 H(+) = [[Fe-S] cluster scaffold protein] + N(6)-[(R)-dihydrolipoyl]-L-lysyl-[protein] + 4 Fe(3+) + 2 hydrogen sulfide + 2 5'-deoxyadenosine + 2 L-methionine + 2 reduced [2Fe-2S]-[ferredoxin]. Its pathway is protein modification; protein lipoylation via endogenous pathway; protein N(6)-(lipoyl)lysine from octanoyl-[acyl-carrier-protein]: step 2/2. Its function is as follows. Catalyzes the radical-mediated insertion of two sulfur atoms into the C-6 and C-8 positions of the octanoyl moiety bound to the lipoyl domains of lipoate-dependent enzymes, thereby converting the octanoylated domains into lipoylated derivatives. The sequence is that of Lipoyl synthase from Chlamydia abortus (strain DSM 27085 / S26/3) (Chlamydophila abortus).